We begin with the raw amino-acid sequence, 102 residues long: MAKQKIRIRLKAYEHRILDQSADKIVETAKRTGATISGPIPLPTERTIYTVLRSPHKFKDSREQFEMRTHKRLIDIVNPTPKTVDSLMKLDLPSGVDIEIKL.

The protein belongs to the universal ribosomal protein uS10 family. In terms of assembly, part of the 30S ribosomal subunit.

Involved in the binding of tRNA to the ribosomes. This is Small ribosomal subunit protein uS10 from Lactiplantibacillus plantarum (strain ATCC BAA-793 / NCIMB 8826 / WCFS1) (Lactobacillus plantarum).